The chain runs to 382 residues: tRNA (guanine(37)-N(1))-methyltransferase (382 aa).

Residues histidine 205, 243–244 (DL), 269–270 (DA), and asparagine 291 each bind S-adenosyl-L-methionine.

The protein belongs to the class I-like SAM-binding methyltransferase superfamily. TRM5/TYW2 family. As to quaternary structure, monomer.

The protein resides in the mitochondrion matrix. It is found in the nucleus. It localises to the cytoplasm. It catalyses the reaction guanosine(37) in tRNA + S-adenosyl-L-methionine = N(1)-methylguanosine(37) in tRNA + S-adenosyl-L-homocysteine + H(+). Functionally, specifically methylates the N1 position of guanosine-37 in various cytoplasmic and mitochondrial tRNAs. Methylation is not dependent on the nature of the nucleoside 5' of the target nucleoside. This is the first step in the biosynthesis of wybutosine (yW), a modified base adjacent to the anticodon of tRNAs and required for accurate decoding. The chain is tRNA (guanine(37)-N(1))-methyltransferase from Entamoeba histolytica (strain ATCC 30459 / HM-1:IMSS / ABRM).